The chain runs to 172 residues: Large ribosomal subunit protein uL10 (172 aa).

This sequence belongs to the universal ribosomal protein uL10 family. In terms of assembly, part of the ribosomal stalk of the 50S ribosomal subunit. The N-terminus interacts with L11 and the large rRNA to form the base of the stalk. The C-terminus forms an elongated spine to which L12 dimers bind in a sequential fashion forming a multimeric L10(L12)X complex.

In terms of biological role, forms part of the ribosomal stalk, playing a central role in the interaction of the ribosome with GTP-bound translation factors. The sequence is that of Large ribosomal subunit protein uL10 from Rhodospirillum centenum (strain ATCC 51521 / SW).